The primary structure comprises 43 residues: Protein PsbN (43 aa).

A helical membrane pass occupies residues 3–23 (IATLVAIFISGLLVSFTGYAL).

The protein belongs to the PsbN family.

Its subcellular location is the plastid. It is found in the chloroplast thylakoid membrane. Its function is as follows. May play a role in photosystem I and II biogenesis. This is Protein PsbN from Euonymus alatus (Burning bush).